The sequence spans 95 residues: UPF0381 protein HI_0400 (95 aa).

The protein belongs to the UPF0381 family.

The sequence is that of UPF0381 protein HI_0400 from Haemophilus influenzae (strain ATCC 51907 / DSM 11121 / KW20 / Rd).